Consider the following 872-residue polypeptide: Alanine--tRNA ligase (872 aa).

Zn(2+) is bound by residues His-567, His-571, Cys-669, and His-673.

Belongs to the class-II aminoacyl-tRNA synthetase family. It depends on Zn(2+) as a cofactor.

The protein localises to the cytoplasm. It catalyses the reaction tRNA(Ala) + L-alanine + ATP = L-alanyl-tRNA(Ala) + AMP + diphosphate. Functionally, catalyzes the attachment of alanine to tRNA(Ala) in a two-step reaction: alanine is first activated by ATP to form Ala-AMP and then transferred to the acceptor end of tRNA(Ala). Also edits incorrectly charged Ser-tRNA(Ala) and Gly-tRNA(Ala) via its editing domain. The polypeptide is Alanine--tRNA ligase (Streptococcus suis (strain 98HAH33)).